We begin with the raw amino-acid sequence, 231 residues long: uncharacterized protein (231 aa).

4 helical membrane-spanning segments follow: residues 39 to 59 (FCIS…YGPF), 70 to 90 (ALSL…VPVI), 156 to 176 (AIIS…GGSI), and 189 to 206 (IVAI…NMFF).

It belongs to the FliR/MopE/SpaR family.

Its subcellular location is the cell membrane. This is an uncharacterized protein from Escherichia coli (strain K12).